A 1396-amino-acid polypeptide reads, in one-letter code: DNA-directed RNA polymerase subunit beta' (1396 aa).

Zn(2+)-binding residues include Cys-73, Cys-75, Cys-88, and Cys-91. 3 residues coordinate Mg(2+): Asp-467, Asp-469, and Asp-471. Zn(2+) contacts are provided by Cys-817, Cys-891, Cys-898, and Cys-901.

This sequence belongs to the RNA polymerase beta' chain family. In terms of assembly, the RNAP catalytic core consists of 2 alpha, 1 beta, 1 beta' and 1 omega subunit. When a sigma factor is associated with the core the holoenzyme is formed, which can initiate transcription. Requires Mg(2+) as cofactor. The cofactor is Zn(2+).

The enzyme catalyses RNA(n) + a ribonucleoside 5'-triphosphate = RNA(n+1) + diphosphate. Its function is as follows. DNA-dependent RNA polymerase catalyzes the transcription of DNA into RNA using the four ribonucleoside triphosphates as substrates. The protein is DNA-directed RNA polymerase subunit beta' of Orientia tsutsugamushi (strain Ikeda) (Rickettsia tsutsugamushi).